The chain runs to 251 residues: uncharacterized protein (251 aa).

The tract at residues 1–22 is disordered; sequence MTQLPELGLRSPNNKSPTGPHP.

This is an uncharacterized protein from Homo sapiens (Human).